The chain runs to 463 residues: UDP-N-acetylmuramate--L-alanine ligase (463 aa).

112 to 118 is an ATP binding site; that stretch reads GTHGKTT.

This sequence belongs to the MurCDEF family.

The protein localises to the cytoplasm. The enzyme catalyses UDP-N-acetyl-alpha-D-muramate + L-alanine + ATP = UDP-N-acetyl-alpha-D-muramoyl-L-alanine + ADP + phosphate + H(+). Its pathway is cell wall biogenesis; peptidoglycan biosynthesis. In terms of biological role, cell wall formation. This chain is UDP-N-acetylmuramate--L-alanine ligase, found in Thiobacillus denitrificans (strain ATCC 25259 / T1).